A 184-amino-acid polypeptide reads, in one-letter code: Phosphopantetheine adenylyltransferase (184 aa).

Residue Ser-8 coordinates substrate. ATP-binding positions include 8–9 and His-16; that span reads SF. Residues Lys-40, Leu-74, and Arg-88 each contribute to the substrate site. ATP is bound by residues 89–91, Glu-99, and 123–129; these read GLR and WSFVSST.

Belongs to the bacterial CoaD family. As to quaternary structure, homohexamer. Mg(2+) serves as cofactor.

Its subcellular location is the cytoplasm. The catalysed reaction is (R)-4'-phosphopantetheine + ATP + H(+) = 3'-dephospho-CoA + diphosphate. It participates in cofactor biosynthesis; coenzyme A biosynthesis; CoA from (R)-pantothenate: step 4/5. Functionally, reversibly transfers an adenylyl group from ATP to 4'-phosphopantetheine, yielding dephospho-CoA (dPCoA) and pyrophosphate. The polypeptide is Phosphopantetheine adenylyltransferase (Deinococcus geothermalis (strain DSM 11300 / CIP 105573 / AG-3a)).